We begin with the raw amino-acid sequence, 360 residues long: POU domain, class 5, transcription factor 1 (360 aa).

Disordered stretches follow at residues 1–50 (MAGH…IGPG) and 87–118 (QGGLETPQPEGEAGAGVESNSEGASPEPCAAP). A 9aaTAD motif is present at residues 4–12 (HLASDFAFS). Residues 41–50 (PPGGSGIGPG) are compositionally biased toward gly residues. Residue serine 111 is modified to Phosphoserine; by MAPK. Lysine 123 is covalently cross-linked (Glycyl lysine isopeptide (Lys-Gly) (interchain with G-Cter in SUMO)). Positions 138–212 (DIKALQKDLE…LLQKWVEEAD (75 aa)) constitute a POU-specific domain. DNA contacts are provided by arginine 157 and glutamine 164. DNA-binding stretches follow at residues 180-186 (SQTTICR) and 193-196 (SFKN). A DNA-binding region (homeobox) is located at residues 230 to 289 (RKRKRTSIENRVRGNLESMFLQCPKPTLQQISHIAQQLGLEKDVVRVWFCNRRQKGKRSS). Threonine 235 bears the Phosphothreonine mark. Phosphoserine occurs at positions 236, 289, and 290. The disordered stretch occupies residues 287–316 (RSSSDYSQREDFEAAGSPFPGGPVSFPLAP). Residues 302–313 (GSPFPGGPVSFP) are compositionally biased toward low complexity. Serine 355 carries the post-translational modification Phosphoserine.

It belongs to the POU transcription factor family. Class-5 subfamily. As to quaternary structure, interacts with PKM. Interacts with WWP2. Interacts with UBE2I and ZSCAN10. Interacts with PCGF1. Interacts with ESRRB; recruits ESRRB near the POU5F1-SOX2 element in the NANOG proximal promoter; the interaction is DNA independent. Interacts with ZNF322. Interacts with MAPK8 and MAPK9; the interaction allows MAPK8 and MAPK9 to phosphorylate POU5F1 on Ser-355. Interacts (when phosphorylated on Ser-355) with FBXW8. Interacts with FBXW4. Interacts with SOX2 and SOX15; binds synergistically with either SOX2 or SOX15 to DNA. Interacts with DDX56. Sumoylation enhances the protein stability, DNA binding and transactivation activity. Sumoylation is required for enhanced YES1 expression. In terms of processing, ubiquitinated; undergoes 'Lys-63'-linked polyubiquitination by WWP2 leading to proteasomal degradation. Post-translationally, ERK1/2-mediated phosphorylation at Ser-111 promotes nuclear exclusion and proteasomal degradation. Phosphorylation at Thr-235 and Ser-236 decrease DNA-binding and alters ability to activate transcription.

It is found in the cytoplasm. It localises to the nucleus. Functionally, transcription factor that binds to the octamer motif (5'-ATTTGCAT-3'). Forms a trimeric complex with SOX2 or SOX15 on DNA and controls the expression of a number of genes involved in embryonic development such as YES1, FGF4, UTF1 and ZFP206. Critical for early embryogenesis and for embryonic stem cell pluripotency. This Sus scrofa (Pig) protein is POU domain, class 5, transcription factor 1 (POU5F1).